The sequence spans 458 residues: Phosphoglucosamine mutase (458 aa).

The Phosphoserine intermediate role is filled by serine 100. 4 residues coordinate Mg(2+): serine 100, aspartate 254, aspartate 256, and aspartate 258. Serine 100 carries the post-translational modification Phosphoserine.

The protein belongs to the phosphohexose mutase family. The cofactor is Mg(2+). Post-translationally, activated by phosphorylation.

It carries out the reaction alpha-D-glucosamine 1-phosphate = D-glucosamine 6-phosphate. Catalyzes the conversion of glucosamine-6-phosphate to glucosamine-1-phosphate. This is Phosphoglucosamine mutase from Nocardia farcinica (strain IFM 10152).